Here is a 575-residue protein sequence, read N- to C-terminus: Muellerian-inhibiting factor (575 aa).

The N-terminal stretch at 1-20 is a signal peptide; that stretch reads MQGPSLSQLVLVLMGALLEA. Positions 21-466 are excised as a propeptide; the sequence is GTPREEVSST…ERSGPARAQR (446 aa). 2 N-linked (GlcNAc...) asparagine glycosylation sites follow: N78 and N343. Intrachain disulfides connect C477-C541, C503-C572, and C507-C574.

It belongs to the TGF-beta family. In terms of assembly, homodimer; disulfide-linked. Post-translationally, preproprotein is proteolytically processed to generate N- and C-terminal cleavage products that homodimerize and associate to form a biologically active non-covalent complex. Binding of the non-covalent complex to AMHR2 induces dissociation of the pro-region from the mature C-terminal dimer. The N-terminal portion of the protein, despite having no intrinsic activity, has the role of amplifying the activity of the C-terminus. As to expression, detected in fetal Sertoli cells. Expressed in granulosa cells of growing follicles but also in theca cells of preovulatory follicles and corpora lutea (at protein level).

It localises to the secreted. In terms of biological role, plays an important role in several reproductive functions. Induces Muellerian duct regression during male fetal sexual differentiation and plays a role in Leydig cell differentiation and function. In female acts as a negative regulator of the primordial to primary follicle transition and decreases FSH sensitivity of growing follicles. AMH signals by binding to a specific type-II receptor, AMHR2, that heterodimerizes with type-I receptors (ACVR1 and BMPR1A), and recruiting SMAD proteins that are translocated to the nucleus to regulate target gene expression. This is Muellerian-inhibiting factor (AMH) from Sus scrofa (Pig).